A 426-amino-acid chain; its full sequence is Transcriptional enhancer factor TEF-1 (426 aa).

Residue M1 is modified to N-acetylmethionine. The segment covering 1 to 12 has biased composition (polar residues); it reads MEPSSWSGSESP. The disordered stretch occupies residues 1 to 31; the sequence is MEPSSWSGSESPAENMERMSDSADKPIDNDA. S11 is subject to Phosphoserine. The span at 15–28 shows a compositional bias: basic and acidic residues; sequence NMERMSDSADKPID. The TEA DNA-binding region spans 28–104; the sequence is DNDAEGVWSP…QVLARRKSRD (77 aa). K108 carries the post-translational modification N6-lactoyllysine. A transcriptional activation region spans residues 167-426; sequence GSSQDVKPFV…QHHIYRLVKD (260 aa).

Interacts with YAP1 and WWTR1/TAZ. In terms of processing, lactylation by AARS1 promotes nuclear localization and stabilization of YAP1, leading to increased Hippo signaling pathway. Delactylated by SIRT1. In developing skeletal muscle and myocardium, in mitotic neuroblasts both in the brain and spinal cord. At later stages of embryogenesis expressed in several developing structures such as the olfactory system, the intestine, and the kidney.

The protein localises to the nucleus. Functionally, transcription factor which plays a key role in the Hippo signaling pathway, a pathway involved in organ size control and tumor suppression by restricting proliferation and promoting apoptosis. The core of this pathway is composed of a kinase cascade wherein MST1/MST2, in complex with its regulatory protein SAV1, phosphorylates and activates LATS1/2 in complex with its regulatory protein MOB1, which in turn phosphorylates and inactivates YAP1 oncoprotein and WWTR1/TAZ. Acts by mediating gene expression of YAP1 and WWTR1/TAZ, thereby regulating cell proliferation, migration and epithelial mesenchymal transition (EMT) induction. Binds specifically and cooperatively to the SPH and GT-IIC 'enhansons' (5'-GTGGAATGT-3') and activates transcription in vivo in a cell-specific manner. The activation function appears to be mediated by a limiting cell-specific transcriptional intermediary factor (TIF). Involved in cardiac development. Binds to the M-CAT motif. The polypeptide is Transcriptional enhancer factor TEF-1 (Tead1) (Mus musculus (Mouse)).